The sequence spans 247 residues: Phosphoribosylaminoimidazole-succinocarboxamide synthase (247 aa).

The protein belongs to the SAICAR synthetase family.

The catalysed reaction is 5-amino-1-(5-phospho-D-ribosyl)imidazole-4-carboxylate + L-aspartate + ATP = (2S)-2-[5-amino-1-(5-phospho-beta-D-ribosyl)imidazole-4-carboxamido]succinate + ADP + phosphate + 2 H(+). It functions in the pathway purine metabolism; IMP biosynthesis via de novo pathway; 5-amino-1-(5-phospho-D-ribosyl)imidazole-4-carboxamide from 5-amino-1-(5-phospho-D-ribosyl)imidazole-4-carboxylate: step 1/2. The chain is Phosphoribosylaminoimidazole-succinocarboxamide synthase from Gloeobacter violaceus (strain ATCC 29082 / PCC 7421).